The primary structure comprises 395 residues: 1-deoxy-D-xylulose 5-phosphate reductoisomerase (395 aa).

NADPH-binding residues include Thr10, Gly11, Ser12, Ile13, and Asn123. Residue Lys124 coordinates 1-deoxy-D-xylulose 5-phosphate. Glu125 contacts NADPH. Asp149 lines the Mn(2+) pocket. Ser150, Glu151, Ser185, and His208 together coordinate 1-deoxy-D-xylulose 5-phosphate. Glu151 is a binding site for Mn(2+). Gly214 is a binding site for NADPH. 1-deoxy-D-xylulose 5-phosphate-binding residues include Ser221, Asn226, Lys227, and Glu230. Position 230 (Glu230) interacts with Mn(2+).

The protein belongs to the DXR family. Requires Mg(2+) as cofactor. Mn(2+) serves as cofactor.

It catalyses the reaction 2-C-methyl-D-erythritol 4-phosphate + NADP(+) = 1-deoxy-D-xylulose 5-phosphate + NADPH + H(+). Its pathway is isoprenoid biosynthesis; isopentenyl diphosphate biosynthesis via DXP pathway; isopentenyl diphosphate from 1-deoxy-D-xylulose 5-phosphate: step 1/6. Functionally, catalyzes the NADPH-dependent rearrangement and reduction of 1-deoxy-D-xylulose-5-phosphate (DXP) to 2-C-methyl-D-erythritol 4-phosphate (MEP). This is 1-deoxy-D-xylulose 5-phosphate reductoisomerase from Shewanella sediminis (strain HAW-EB3).